The primary structure comprises 196 residues: uncharacterized protein (196 aa).

S-adenosyl-L-methionine-binding positions include 44–46 (TTA), glycine 80, valine 100, and 107–109 (PSL).

The protein belongs to the class IV-like SAM-binding methyltransferase superfamily. RNA methyltransferase TrmH family.

This is an uncharacterized protein from Serratia marcescens.